The chain runs to 99 residues: Small ribosomal subunit protein uS19 (99 aa).

Belongs to the universal ribosomal protein uS19 family.

Its function is as follows. Protein S19 forms a complex with S13 that binds strongly to the 16S ribosomal RNA. This chain is Small ribosomal subunit protein uS19, found in Sulfurihydrogenibium sp. (strain YO3AOP1).